A 95-amino-acid chain; its full sequence is Small ribosomal subunit protein uS19 (95 aa).

The protein belongs to the universal ribosomal protein uS19 family.

In terms of biological role, protein S19 forms a complex with S13 that binds strongly to the 16S ribosomal RNA. The chain is Small ribosomal subunit protein uS19 from Chloroflexus aurantiacus (strain ATCC 29366 / DSM 635 / J-10-fl).